A 263-amino-acid chain; its full sequence is MTKVEYKHTEIAVKKQLGQNFLTDRNITRKIVRLSGAKPEENILEIGPGFGALTKEIIEVCPSFTVVEKDPKLAAFIRTEYPQLNVIEADFLKIDLEAVTGARKLRILGNIPYSITSPILFRLLEYRRCFMHATLMMQHEVAMRIVAVPSTKEYGILAVQLQAFFDVSYGFRVGRKVFKPQPGVDSAVITITPKEHVPLSDPEGFSRFVRCAFHQRRKTLLNNLKESYNLDAVPSEVLKRRAEALAIQELFELFKEMKPKMLS.

Asn20, Leu22, Gly47, Glu68, Asp90, and Asn110 together coordinate S-adenosyl-L-methionine.

The protein belongs to the class I-like SAM-binding methyltransferase superfamily. rRNA adenine N(6)-methyltransferase family. RsmA subfamily.

The protein localises to the cytoplasm. It catalyses the reaction adenosine(1518)/adenosine(1519) in 16S rRNA + 4 S-adenosyl-L-methionine = N(6)-dimethyladenosine(1518)/N(6)-dimethyladenosine(1519) in 16S rRNA + 4 S-adenosyl-L-homocysteine + 4 H(+). In terms of biological role, specifically dimethylates two adjacent adenosines (A1518 and A1519) in the loop of a conserved hairpin near the 3'-end of 16S rRNA in the 30S particle. May play a critical role in biogenesis of 30S subunits. The polypeptide is Ribosomal RNA small subunit methyltransferase A (Chlorobium limicola (strain DSM 245 / NBRC 103803 / 6330)).